A 71-amino-acid chain; its full sequence is Small ribosomal subunit protein bS21 (71 aa).

Belongs to the bacterial ribosomal protein bS21 family.

The polypeptide is Small ribosomal subunit protein bS21 (Psychromonas ingrahamii (strain DSM 17664 / CCUG 51855 / 37)).